A 662-amino-acid chain; its full sequence is Calcium-dependent protease (662 aa).

Positions 196–529 constitute a Peptidase S8 domain; that stretch reads QWHLKQTTIG…YGRINALKAV (334 aa). Active-site charge relay system residues include Asp233, His270, and Ser466. Residues 535 to 662 enclose the P/Homo B domain; that stretch reads AQPEPVSIFT…IRSLTIELGF (128 aa).

Belongs to the peptidase S8 family.

Its subcellular location is the cytoplasm. Its function is as follows. Degrades phycobiliproteins in vitro. Has a substrate specificity similar to that of trypsin. The polypeptide is Calcium-dependent protease (prcA) (Trichormus variabilis (strain ATCC 29413 / PCC 7937) (Anabaena variabilis)).